A 33-amino-acid chain; its full sequence is Alpha-amanitin proprotein 2 (33 aa).

A propeptide spanning residues Met-1–Pro-10 is cleaved from the precursor. (3R,4R)-4,5-dihydroxyisoleucine; in form alpha-amanitin is present on Ile-11. At Ile-11 the chain carries (3R,4S)-4-hydroxyisoleucine; in form gamma-amanitin. A cross-link (cyclopeptide (Ile-Pro)) is located at residues Ile-11–Pro-18. The segment at residues Trp-12 to Cys-16 is a cross-link (2'-cysteinyl-6'-hydroxytryptophan sulfoxide (Trp-Cys)). Residue Pro-18 is modified to 4-hydroxyproline. A propeptide spanning residues Cys-19 to Ala-33 is cleaved from the precursor.

This sequence belongs to the MSDIN fungal toxin family. In terms of processing, processed by the macrocyclase-peptidase enzyme POPB to yield a toxic cyclic octapeptide. POPB first removes 10 residues from the N-terminus. Conformational trapping of the remaining peptide forces the enzyme to release this intermediate rather than proceed to macrocyclization. The enzyme rebinds the remaining peptide in a different conformation and catalyzes macrocyclization of the N-terminal 8 residues. Expressed in basidiocarps.

Its function is as follows. Major toxin belonging to the bicyclic octapeptides amatoxins that acts by binding non-competitively to RNA polymerase II and greatly slowing the elongation of transcripts from target promoters. This Amanita exitialis (Guangzhou destroying angel) protein is Alpha-amanitin proprotein 2.